The following is a 905-amino-acid chain: Gamma-tubulin complex component 2 (905 aa).

Tyr83 carries the post-translational modification Phosphotyrosine. Residues 877–905 (AERSQKAAPQVPVPRGPSAPAPRVAIPAQ) form a disordered region. The span at 887–896 (VPVPRGPSAP) shows a compositional bias: pro residues.

It belongs to the TUBGCP family. As to quaternary structure, component of the gamma-tubulin ring complex (gTuRC) consisting of TUBGCP2, TUBGCP3, TUBGCP4, TUBGCP5 and TUBGCP6 and gamma-tubulin TUBG1 or TUBG2. TUBGCP2, TUBGCP3, TUBGCP4, TUBGCP5 and TUBGCP6 assemble in a 5:5:2:1:1 stoichiometry; each is associated with a gamma-tubulin, thereby arranging 14 gamma-tubulins in a helical manner. Gamma-tubulin at the first position is blocked by TUBGCP3 at the last position, allowing 13 protafilaments to grow into a microtubule. The gTuRC (via TUBGCP3 and TUBGCP6) interacts with ACTB and MZT1; the interactions form a luminal bridge that stabilizes the initial structure during complex assembly. The gTuRC (via TUBGCP2) interacts with MZT2A/MZT2B and CDK5RAP2 (via CM1 motif); the interactions play a role in gTuRC activation. Interacts with ATF5; the ATF5:PCNT:polyglutamylated tubulin (PGT) tripartite unites the mother centriole and the pericentriolar material (PCM) in the centrosome.

The protein resides in the cytoplasm. It localises to the cytoskeleton. Its subcellular location is the microtubule organizing center. The protein localises to the centrosome. Functionally, component of the gamma-tubulin ring complex (gTuRC) which mediates microtubule nucleation. The gTuRC regulates the minus-end nucleation of alpha-beta tubulin heterodimers that grow into microtubule protafilaments, a critical step in centrosome duplication and spindle formation. Plays a role in neuronal migration. The protein is Gamma-tubulin complex component 2 (Tubgcp2) of Mus musculus (Mouse).